Here is a 231-residue protein sequence, read N- to C-terminus: 5'-methylthioadenosine/S-adenosylhomocysteine nucleosidase (231 aa).

E12 acts as the Proton acceptor in catalysis. Substrate is bound by residues G78, I153, and 174 to 175 (ME). D198 functions as the Proton donor in the catalytic mechanism.

This sequence belongs to the PNP/UDP phosphorylase family. MtnN subfamily.

It carries out the reaction S-adenosyl-L-homocysteine + H2O = S-(5-deoxy-D-ribos-5-yl)-L-homocysteine + adenine. The enzyme catalyses S-methyl-5'-thioadenosine + H2O = 5-(methylsulfanyl)-D-ribose + adenine. It catalyses the reaction 5'-deoxyadenosine + H2O = 5-deoxy-D-ribose + adenine. It participates in amino-acid biosynthesis; L-methionine biosynthesis via salvage pathway; S-methyl-5-thio-alpha-D-ribose 1-phosphate from S-methyl-5'-thioadenosine (hydrolase route): step 1/2. Catalyzes the irreversible cleavage of the glycosidic bond in both 5'-methylthioadenosine (MTA) and S-adenosylhomocysteine (SAH/AdoHcy) to adenine and the corresponding thioribose, 5'-methylthioribose and S-ribosylhomocysteine, respectively. Also cleaves 5'-deoxyadenosine, a toxic by-product of radical S-adenosylmethionine (SAM) enzymes, into 5-deoxyribose and adenine. In Shewanella sp. (strain W3-18-1), this protein is 5'-methylthioadenosine/S-adenosylhomocysteine nucleosidase.